A 241-amino-acid chain; its full sequence is Small ribosomal subunit protein uS2 (241 aa).

It belongs to the universal ribosomal protein uS2 family.

In Enterobacter sp. (strain 638), this protein is Small ribosomal subunit protein uS2.